A 542-amino-acid polypeptide reads, in one-letter code: Bifunctional pantoate ligase/cytidylate kinase (542 aa).

The pantoate--beta-alanine ligase stretch occupies residues 1–280; sequence MHWLRTVAAL…VGQTRLIDNL (280 aa). 28–35 contributes to the ATP binding site; sequence MGSLHEGH. His-35 serves as the catalytic Proton donor. Position 59 (Gln-59) interacts with (R)-pantoate. Gln-59 serves as a coordination point for beta-alanine. Residue 150–153 coordinates ATP; that stretch reads GQKD. Gln-156 serves as a coordination point for (R)-pantoate. ATP is bound by residues Val-179 and 187–190; that span reads CSSR. Residues 281 to 542 are cytidylate kinase; it reads LLSPEQGDPL…ERSGPARLDQ (262 aa). The disordered stretch occupies residues 287–311; the sequence is GDPLPERVQHAAPPSSGTTSPPRRP.

In the N-terminal section; belongs to the pantothenate synthetase family. The protein in the C-terminal section; belongs to the cytidylate kinase family. Type 1 subfamily.

It is found in the cytoplasm. It catalyses the reaction (R)-pantoate + beta-alanine + ATP = (R)-pantothenate + AMP + diphosphate + H(+). The catalysed reaction is CMP + ATP = CDP + ADP. The enzyme catalyses dCMP + ATP = dCDP + ADP. It participates in cofactor biosynthesis; (R)-pantothenate biosynthesis; (R)-pantothenate from (R)-pantoate and beta-alanine: step 1/1. In terms of biological role, catalyzes the condensation of pantoate with beta-alanine in an ATP-dependent reaction via a pantoyl-adenylate intermediate. Functionally, catalyzes the transfer of a phosphate group from ATP to either CMP or dCMP to form CDP or dCDP and ADP, respectively. This chain is Bifunctional pantoate ligase/cytidylate kinase, found in Synechococcus sp. (strain JA-2-3B'a(2-13)) (Cyanobacteria bacterium Yellowstone B-Prime).